The sequence spans 501 residues: Aluminum-activated malate transporter 2 (501 aa).

6 consecutive transmembrane segments (helical) span residues 22 to 42 (VVHAFKVGLALALVSSFYYYQ), 52 to 72 (AMWAVMTVVVVFEFSVGATLG), 78 to 98 (AVATLVAGGLGIGAHHLASLS), 101 to 121 (TVEPILLAIFVFVLAALSTFV), 130 to 150 (RYDYGVLIFILTFALISVSGF), and 166 to 186 (VIMGGVSCVLISIFVCPVWAG). The disordered stretch occupies residues 398 to 425 (FKNKKKPSKSNSGSIGQAMPNKSHDDDD).

The protein belongs to the aromatic acid exporter (TC 2.A.85) family.

It is found in the membrane. In terms of biological role, malate transporter. This chain is Aluminum-activated malate transporter 2 (ALMT2), found in Arabidopsis thaliana (Mouse-ear cress).